A 434-amino-acid chain; its full sequence is Glutamate/glutamine/aspartate/asparagine transport system permease protein BztC (434 aa).

The next 10 helical transmembrane spans lie at 41-61, 113-133, 135-155, 156-176, 180-200, 227-247, 272-292, 298-318, 360-380, and 398-418; these read LTVFGLLATVWLVQAAAPWLL, LFVTFAGLFLALAPVLFDALP, KLIWGTLLYPLAAFWLLWGGP, IWGPVSVLAGFAILGLLFTAL, LGVPVSAGIGLVVAALFWLYA, FLLALVIGVTAIVVSLPLGIL, GVPLITLLFTASLLLQYFLPP, LILRVVILVTLFAAAYIAEVI, IVSSFIGLFKDTTLVAFVGLF, and GTYWEPYIFVALIFFLFNFSM. The ABC transmembrane type-1 domain maps to 227-422; that stretch reads FLLALVIGVT…LFNFSMSRYS (196 aa).

It belongs to the binding-protein-dependent transport system permease family. HisMQ subfamily. In terms of assembly, bztB and BztC form a heterodimer which can form a membrane complex with a homodimer of BztD.

The protein resides in the cell inner membrane. Part of a binding-protein-dependent transport system for glutamate, glutamine, aspartate and asparagine. Probably responsible for the translocation of the substrate across the membrane. This Rhodobacter capsulatus (strain ATCC BAA-309 / NBRC 16581 / SB1003) protein is Glutamate/glutamine/aspartate/asparagine transport system permease protein BztC (bztC).